Here is a 568-residue protein sequence, read N- to C-terminus: Phosphomethylpyrimidine synthase (568 aa).

Residues Asn-188, Met-217, Tyr-246, His-282, 302 to 304 (SRG), 343 to 346 (DGLR), and Glu-382 each bind substrate. His-386 lines the Zn(2+) pocket. Tyr-409 is a substrate binding site. His-450 contacts Zn(2+). Residues Cys-530, Cys-533, and Cys-538 each contribute to the [4Fe-4S] cluster site.

This sequence belongs to the ThiC family. As to quaternary structure, homodimer. It depends on [4Fe-4S] cluster as a cofactor.

The enzyme catalyses 5-amino-1-(5-phospho-beta-D-ribosyl)imidazole + S-adenosyl-L-methionine = 4-amino-2-methyl-5-(phosphooxymethyl)pyrimidine + CO + 5'-deoxyadenosine + formate + L-methionine + 3 H(+). It functions in the pathway cofactor biosynthesis; thiamine diphosphate biosynthesis. Its function is as follows. Catalyzes the synthesis of the hydroxymethylpyrimidine phosphate (HMP-P) moiety of thiamine from aminoimidazole ribotide (AIR) in a radical S-adenosyl-L-methionine (SAM)-dependent reaction. In Idiomarina loihiensis (strain ATCC BAA-735 / DSM 15497 / L2-TR), this protein is Phosphomethylpyrimidine synthase.